The following is a 195-amino-acid chain: Imidazoleglycerol-phosphate dehydratase (195 aa).

This sequence belongs to the imidazoleglycerol-phosphate dehydratase family.

The protein localises to the cytoplasm. The enzyme catalyses D-erythro-1-(imidazol-4-yl)glycerol 3-phosphate = 3-(imidazol-4-yl)-2-oxopropyl phosphate + H2O. It functions in the pathway amino-acid biosynthesis; L-histidine biosynthesis; L-histidine from 5-phospho-alpha-D-ribose 1-diphosphate: step 6/9. In Alkaliphilus metalliredigens (strain QYMF), this protein is Imidazoleglycerol-phosphate dehydratase.